Here is a 187-residue protein sequence, read N- to C-terminus: Elongation factor P (187 aa).

It belongs to the elongation factor P family.

It localises to the cytoplasm. The protein operates within protein biosynthesis; polypeptide chain elongation. In terms of biological role, involved in peptide bond synthesis. Stimulates efficient translation and peptide-bond synthesis on native or reconstituted 70S ribosomes in vitro. Probably functions indirectly by altering the affinity of the ribosome for aminoacyl-tRNA, thus increasing their reactivity as acceptors for peptidyl transferase. This chain is Elongation factor P, found in Mycobacterium avium (strain 104).